A 100-amino-acid polypeptide reads, in one-letter code: Urease subunit gamma (100 aa).

It belongs to the urease gamma subunit family. As to quaternary structure, heterotrimer of UreA (gamma), UreB (beta) and UreC (alpha) subunits. Three heterotrimers associate to form the active enzyme.

The protein localises to the cytoplasm. The enzyme catalyses urea + 2 H2O + H(+) = hydrogencarbonate + 2 NH4(+). It participates in nitrogen metabolism; urea degradation; CO(2) and NH(3) from urea (urease route): step 1/1. In Marinomonas sp. (strain MWYL1), this protein is Urease subunit gamma.